A 414-amino-acid polypeptide reads, in one-letter code: Histidine--tRNA ligase (414 aa).

This sequence belongs to the class-II aminoacyl-tRNA synthetase family. In terms of assembly, homodimer.

The protein resides in the cytoplasm. The enzyme catalyses tRNA(His) + L-histidine + ATP = L-histidyl-tRNA(His) + AMP + diphosphate + H(+). The protein is Histidine--tRNA ligase of Rickettsia conorii (strain ATCC VR-613 / Malish 7).